We begin with the raw amino-acid sequence, 624 residues long: Alpha-mannosidase I MNS4 (624 aa).

Residues 1 to 7 lie on the Cytoplasmic side of the membrane; it reads MDSNFKW. The helical; Signal-anchor for type II membrane protein transmembrane segment at 8 to 28 threads the bilayer; that stretch reads LLFAILISLTFSGFVLHHGVL. Topologically, residues 29–624 are lumenal; the sequence is AESVKPDEAK…ETDDQRSYSS (596 aa). N-linked (GlcNAc...) asparagine glycosylation is present at Asn-115. Catalysis depends on Glu-122, which acts as the Proton donor. The active site involves Asp-262. The Proton donor role is filled by Glu-355. Glu-376 is a catalytic residue. Position 466 (Thr-466) interacts with Ca(2+). N-linked (GlcNAc...) asparagine glycosylation occurs at Asn-494. Residues 574–624 form a disordered region; the sequence is QTVEKRPQEEEGFTSQSEPIMTISGGSSNDQTGQELTLLESETDDQRSYSS. A compositionally biased stretch (polar residues) spans 586-608; sequence FTSQSEPIMTISGGSSNDQTGQE.

It belongs to the glycosyl hydrolase 47 family. Requires Ca(2+) as cofactor.

It localises to the endoplasmic reticulum membrane. The protein operates within protein modification; protein glycosylation. In terms of biological role, can convert Man(9)GlcNAc(2) and Man(8)GlcNAc(2) into N-glycans with a terminal alpha-1,6-linked Man residue in the C-branch. Functions in the formation of unique N-glycan structures that are specifically recognized by components of the endoplasmic reticulum-associated degradation (ERAD) machinery, which leads to the degradation of misfolded glycoproteins. Most likely generates N-glycan signal on misfolded glycoproteins that is subsequently recognized by OS9. Required for ERAD of the heavily glycosylated and misfolded BRI1 variants BRI1-5 and BRI1-9. Does not seem to play role in N-glycan processing of correctly folded proteins destined for secretion. The polypeptide is Alpha-mannosidase I MNS4 (MNS4) (Arabidopsis thaliana (Mouse-ear cress)).